A 272-amino-acid polypeptide reads, in one-letter code: Proteasome subunit beta (272 aa).

Positions 1-47 are cleaved as a propeptide — removed in mature form; by autocatalysis; that stretch reads MSTGGDRLPEAFLRPGSSSFVEFLREVAPQSHPEHARPAGAGDVVHA. The active-site Nucleophile is the Thr-48.

This sequence belongs to the peptidase T1B family. In terms of assembly, the 20S proteasome core is composed of 14 alpha and 14 beta subunits that assemble into four stacked heptameric rings, resulting in a barrel-shaped structure. The two inner rings, each composed of seven catalytic beta subunits, are sandwiched by two outer rings, each composed of seven alpha subunits. The catalytic chamber with the active sites is on the inside of the barrel. Has a gated structure, the ends of the cylinder being occluded by the N-termini of the alpha-subunits. Is capped by the proteasome-associated ATPase, ARC.

It localises to the cytoplasm. It catalyses the reaction Cleavage of peptide bonds with very broad specificity.. It participates in protein degradation; proteasomal Pup-dependent pathway. With respect to regulation, the formation of the proteasomal ATPase ARC-20S proteasome complex, likely via the docking of the C-termini of ARC into the intersubunit pockets in the alpha-rings, may trigger opening of the gate for substrate entry. Interconversion between the open-gate and close-gate conformations leads to a dynamic regulation of the 20S proteasome proteolysis activity. Component of the proteasome core, a large protease complex with broad specificity involved in protein degradation. This Beutenbergia cavernae (strain ATCC BAA-8 / DSM 12333 / CCUG 43141 / JCM 11478 / NBRC 16432 / NCIMB 13614 / HKI 0122) protein is Proteasome subunit beta.